Here is an 85-residue protein sequence, read N- to C-terminus: uncharacterized protein (85 aa).

Disordered stretches follow at residues 1-22 and 41-85; these read MFAP…TSGF and EKER…SFLR. Positions 75–85 are enriched in polar residues; sequence FPSNYRGSFLR.

This is an uncharacterized protein from Dryophytes versicolor (chameleon treefrog).